Consider the following 166-residue polypeptide: Transcription factor HES-5 (166 aa).

In terms of domain architecture, bHLH spans 16 to 72 (KNRLRKPVVEKMRRDRINSSIEQLKLLLEQEFARHQPNSKLEKADILEMAVSYLKHS). The 32-residue stretch at 88-119 (YSEGYSWCLQEAVQFLTLHAASDTQMKLLYHF) folds into the Orange domain. The interval 125–144 (APAAPAKEPKAPGAAPPPAL) is disordered. Residues 163–166 (WRPW) carry the WRPW motif motif.

In terms of assembly, transcription repression requires formation of a complex with a corepressor protein of the Groucho/TLE family. Expressed in fetal heart and brain tumors.

It is found in the nucleus. In terms of biological role, transcriptional repressor of genes that require a bHLH protein for their transcription. Plays an important role as neurogenesis negative regulator. The protein is Transcription factor HES-5 (HES5) of Homo sapiens (Human).